The sequence spans 116 residues: NADH-ubiquinone oxidoreductase chain 3 (116 aa).

3 helical membrane passes run 3–23 (LILA…MIAF), 56–76 (FFLV…LLPL), and 85–105 (PTLA…GLIH).

This sequence belongs to the complex I subunit 3 family.

Its subcellular location is the mitochondrion membrane. It catalyses the reaction a ubiquinone + NADH + 5 H(+)(in) = a ubiquinol + NAD(+) + 4 H(+)(out). Its function is as follows. Core subunit of the mitochondrial membrane respiratory chain NADH dehydrogenase (Complex I) that is believed to belong to the minimal assembly required for catalysis. Complex I functions in the transfer of electrons from NADH to the respiratory chain. The immediate electron acceptor for the enzyme is believed to be ubiquinone. The sequence is that of NADH-ubiquinone oxidoreductase chain 3 (MT-ND3) from Latimeria chalumnae (Coelacanth).